A 232-amino-acid polypeptide reads, in one-letter code: uncharacterized protein (232 aa).

Residues 1 to 46 are disordered; that stretch reads MNAHNMRGPPGDLAKVVPGSRSGWNEGSRCRQADKGDGQCRNGGRD. Residues 28–46 show a composition bias toward basic and acidic residues; that stretch reads SRCRQADKGDGQCRNGGRD.

This is an uncharacterized protein from Rhizobium meliloti (Ensifer meliloti).